The following is a 71-amino-acid chain: Small ribosomal subunit protein bS21 (71 aa).

The interval 40–71 (KPTQVRKRKQAAAVKRHMKRLNREQQRRQRPY) is disordered. The segment covering 43–59 (QVRKRKQAAAVKRHMKR) has biased composition (basic residues). Residues 60–71 (LNREQQRRQRPY) are compositionally biased toward basic and acidic residues.

It belongs to the bacterial ribosomal protein bS21 family.

In Halorhodospira halophila (strain DSM 244 / SL1) (Ectothiorhodospira halophila (strain DSM 244 / SL1)), this protein is Small ribosomal subunit protein bS21.